Consider the following 125-residue polypeptide: NADPH-dependent 7-cyano-7-deazaguanine reductase (125 aa).

The active-site Thioimide intermediate is C40. The active-site Proton donor is the D47. Residues 62–64 (LET) and 81–82 (HE) each bind substrate.

It belongs to the GTP cyclohydrolase I family. QueF type 1 subfamily.

Its subcellular location is the cytoplasm. The enzyme catalyses 7-aminomethyl-7-carbaguanine + 2 NADP(+) = 7-cyano-7-deazaguanine + 2 NADPH + 3 H(+). Its pathway is tRNA modification; tRNA-queuosine biosynthesis. In terms of biological role, catalyzes the NADPH-dependent reduction of 7-cyano-7-deazaguanine (preQ0) to 7-aminomethyl-7-deazaguanine (preQ1). This is NADPH-dependent 7-cyano-7-deazaguanine reductase from Frankia casuarinae (strain DSM 45818 / CECT 9043 / HFP020203 / CcI3).